The primary structure comprises 296 residues: Pre-mRNA-splicing factor CWC23 (296 aa).

The J domain maps to 14 to 86 (DLYKLLELNY…AKKAEYDQWV (73 aa)).

The protein belongs to the DnaJ family. Associated with the spliceosome.

The protein resides in the cytoplasm. It localises to the nucleus. Its function is as follows. Involved in pre-mRNA splicing. May be involved in endoplasmic reticulum-associated protein degradation (ERAD) and required for growth at low and high temperatures. The sequence is that of Pre-mRNA-splicing factor CWC23 (CWC23) from Candida glabrata (strain ATCC 2001 / BCRC 20586 / JCM 3761 / NBRC 0622 / NRRL Y-65 / CBS 138) (Yeast).